A 462-amino-acid polypeptide reads, in one-letter code: Phosphoglucosamine mutase (462 aa).

Ser111 acts as the Phosphoserine intermediate in catalysis. The Mg(2+) site is built by Ser111, Asp250, Asp252, and Asp254. Ser111 is modified (phosphoserine).

Belongs to the phosphohexose mutase family. Mg(2+) serves as cofactor. In terms of processing, activated by phosphorylation.

It carries out the reaction alpha-D-glucosamine 1-phosphate = D-glucosamine 6-phosphate. Functionally, catalyzes the conversion of glucosamine-6-phosphate to glucosamine-1-phosphate. The polypeptide is Phosphoglucosamine mutase (Synechococcus sp. (strain WH7803)).